A 209-amino-acid chain; its full sequence is Probable chalcone--flavanone isomerase 3 (209 aa).

Belongs to the chalcone isomerase family.

The enzyme catalyses a chalcone = a flavanone.. The protein operates within secondary metabolite biosynthesis; flavonoid biosynthesis. Its function is as follows. Involved in anthocyanin biosynthesis. The polypeptide is Probable chalcone--flavanone isomerase 3 (CHI3) (Arabidopsis thaliana (Mouse-ear cress)).